The chain runs to 172 residues: Probable tryptophan transport protein (172 aa).

The next 4 membrane-spanning stretches (helical) occupy residues 7–29 (VIMA…FLGG), 49–71 (VQNV…AFPA), 104–126 (AVLT…LLIV), and 136–158 (FAAV…YPIV).

It belongs to the vitamin uptake transporter (VUT/ECF) (TC 2.A.88) family. TrpP subfamily.

It is found in the cell membrane. Its function is as follows. Probably involved in tryptophan uptake. This Bacillus subtilis (strain 168) protein is Probable tryptophan transport protein (trpP).